Consider the following 181-residue polypeptide: Malignant T-cell-amplified sequence 1-B (181 aa).

The PUA domain occupies 92–171; the sequence is LPHQQVDKGA…IGIENIHYLN (80 aa).

The protein belongs to the MCTS1 family.

It is found in the cytoplasm. In terms of biological role, plays a role as translation enhancer and involved in cell cycle regulation. The protein is Malignant T-cell-amplified sequence 1-B (mcts1-b) of Xenopus laevis (African clawed frog).